We begin with the raw amino-acid sequence, 281 residues long: NADPH-dependent 7-cyano-7-deazaguanine reductase (281 aa).

Residue Ile88–Ser90 coordinates substrate. NADPH is bound at residue Ser90–Lys91. The Thioimide intermediate role is filled by Cys189. Asp196 (proton donor) is an active-site residue. His228–Glu229 contributes to the substrate binding site. Arg257–Gly258 is an NADPH binding site.

The protein belongs to the GTP cyclohydrolase I family. QueF type 2 subfamily. As to quaternary structure, homodimer.

Its subcellular location is the cytoplasm. The enzyme catalyses 7-aminomethyl-7-carbaguanine + 2 NADP(+) = 7-cyano-7-deazaguanine + 2 NADPH + 3 H(+). It functions in the pathway tRNA modification; tRNA-queuosine biosynthesis. Its function is as follows. Catalyzes the NADPH-dependent reduction of 7-cyano-7-deazaguanine (preQ0) to 7-aminomethyl-7-deazaguanine (preQ1). This is NADPH-dependent 7-cyano-7-deazaguanine reductase from Sodalis glossinidius (strain morsitans).